We begin with the raw amino-acid sequence, 602 residues long: 4-hydroxy-3-methylbut-2-en-1-yl diphosphate synthase (flavodoxin) (602 aa).

[4Fe-4S] cluster contacts are provided by cysteine 508, cysteine 511, cysteine 543, and glutamate 550.

It belongs to the IspG family. The cofactor is [4Fe-4S] cluster.

It catalyses the reaction (2E)-4-hydroxy-3-methylbut-2-enyl diphosphate + oxidized [flavodoxin] + H2O + 2 H(+) = 2-C-methyl-D-erythritol 2,4-cyclic diphosphate + reduced [flavodoxin]. It functions in the pathway isoprenoid biosynthesis; isopentenyl diphosphate biosynthesis via DXP pathway; isopentenyl diphosphate from 1-deoxy-D-xylulose 5-phosphate: step 5/6. Converts 2C-methyl-D-erythritol 2,4-cyclodiphosphate (ME-2,4cPP) into 1-hydroxy-2-methyl-2-(E)-butenyl 4-diphosphate. The chain is 4-hydroxy-3-methylbut-2-en-1-yl diphosphate synthase (flavodoxin) from Chlamydia trachomatis serovar L2 (strain ATCC VR-902B / DSM 19102 / 434/Bu).